Here is a 544-residue protein sequence, read N- to C-terminus: Chaperonin GroEL (544 aa).

ATP contacts are provided by residues Thr-29–Pro-32, Asp-86–Thr-90, Gly-413, Asn-476–Ala-478, and Asp-492.

It belongs to the chaperonin (HSP60) family. In terms of assembly, forms a cylinder of 14 subunits composed of two heptameric rings stacked back-to-back. Interacts with the co-chaperonin GroES.

The protein localises to the cytoplasm. It catalyses the reaction ATP + H2O + a folded polypeptide = ADP + phosphate + an unfolded polypeptide.. In terms of biological role, together with its co-chaperonin GroES, plays an essential role in assisting protein folding. The GroEL-GroES system forms a nano-cage that allows encapsulation of the non-native substrate proteins and provides a physical environment optimized to promote and accelerate protein folding. This Bacillus pumilus (strain SAFR-032) protein is Chaperonin GroEL.